Consider the following 264-residue polypeptide: ATP synthase subunit a (264 aa).

6 helical membrane passes run 29–49 (TWHI…LWLF), 89–109 (VIAP…FMDM), 134–154 (DLNI…YYSI), 177–197 (IPVN…SLAL), 208–228 (LIFI…TLGV), and 235–255 (LIFH…LTIV).

The protein belongs to the ATPase A chain family. As to quaternary structure, F-type ATPases have 2 components, CF(1) - the catalytic core - and CF(0) - the membrane proton channel. CF(1) has five subunits: alpha(3), beta(3), gamma(1), delta(1), epsilon(1). CF(0) has three main subunits: a(1), b(2) and c(9-12). The alpha and beta chains form an alternating ring which encloses part of the gamma chain. CF(1) is attached to CF(0) by a central stalk formed by the gamma and epsilon chains, while a peripheral stalk is formed by the delta and b chains.

It is found in the cell inner membrane. Key component of the proton channel; it plays a direct role in the translocation of protons across the membrane. In Shewanella woodyi (strain ATCC 51908 / MS32), this protein is ATP synthase subunit a.